A 254-amino-acid polypeptide reads, in one-letter code: 3-deoxy-manno-octulosonate cytidylyltransferase (254 aa).

This sequence belongs to the KdsB family.

It is found in the cytoplasm. It catalyses the reaction 3-deoxy-alpha-D-manno-oct-2-ulosonate + CTP = CMP-3-deoxy-beta-D-manno-octulosonate + diphosphate. It participates in nucleotide-sugar biosynthesis; CMP-3-deoxy-D-manno-octulosonate biosynthesis; CMP-3-deoxy-D-manno-octulosonate from 3-deoxy-D-manno-octulosonate and CTP: step 1/1. Its pathway is bacterial outer membrane biogenesis; lipopolysaccharide biosynthesis. Its function is as follows. Activates KDO (a required 8-carbon sugar) for incorporation into bacterial lipopolysaccharide in Gram-negative bacteria. This is 3-deoxy-manno-octulosonate cytidylyltransferase from Pseudoalteromonas atlantica (strain T6c / ATCC BAA-1087).